A 716-amino-acid polypeptide reads, in one-letter code: UvrABC system protein C (716 aa).

The region spanning Ala14–Ile94 is the GIY-YIG domain. Residues Thr206 to Ser241 form the UVR domain.

The protein belongs to the UvrC family. As to quaternary structure, interacts with UvrB in an incision complex.

The protein resides in the cytoplasm. Functionally, the UvrABC repair system catalyzes the recognition and processing of DNA lesions. UvrC both incises the 5' and 3' sides of the lesion. The N-terminal half is responsible for the 3' incision and the C-terminal half is responsible for the 5' incision. In Anaeromyxobacter sp. (strain Fw109-5), this protein is UvrABC system protein C.